Here is a 449-residue protein sequence, read N- to C-terminus: Cryptochrome DASH (449 aa).

The Photolyase/cryptochrome alpha/beta domain maps to 15-147; it reads RLGLFVFRND…PFHETPNNTL (133 aa).

The protein belongs to the DNA photolyase class-1 family. It depends on FAD as a cofactor. Requires (6R)-5,10-methylene-5,6,7,8-tetrahydrofolate as cofactor.

In terms of biological role, may have a photoreceptor function. Binds DNA; probably functions as a transcriptional repressor. The sequence is that of Cryptochrome DASH (cry) from Idiomarina loihiensis (strain ATCC BAA-735 / DSM 15497 / L2-TR).